A 766-amino-acid polypeptide reads, in one-letter code: Leucine-rich repeat and fibronectin type III domain-containing protein 1 (766 aa).

The N-terminal stretch at 1 to 31 (MAPGPFSSGLLSPPPAALPFLLLLWAGASRG) is a signal peptide. Residues 32–65 (QPCPGRCICQNVAPTLTMLCAKTGLLFVPPAIDR) enclose the LRRNT domain. The Extracellular portion of the chain corresponds to 32–536 (QPCPGRCICQ…LRAHFLGGTM (505 aa)). 7 LRR repeats span residues 66–87 (RVVE…DFAN), 90–111 (SLVH…AFAD), 114–135 (ALRA…QLRG), 138–159 (NLRH…AFDA), 163–184 (TVED…AVGQ), 187–208 (NLNT…TFVQ), and 211–232 (KLVR…GLFL). A glycan (N-linked (GlcNAc...) asparagine) is linked at asparagine 87. The 47-residue stretch at 252 to 298 (NPLHCNCELLWLRRLTREDDLETCATPEHLTDRYFWSIPEEEFLCEP) folds into the LRRCT domain. Residues 299-386 (PLITRQAGGR…GEATAPVEVC (88 aa)) enclose the Ig-like domain. A disulfide bridge links cysteine 321 with cysteine 370. A glycan (N-linked (GlcNAc...) asparagine) is linked at asparagine 343. Positions 397–422 (PAAPPPLTEPGSSDIATPGRPGANDS) are disordered. Residues 424-520 (TERRLVAAEL…GCVQFTTAGD (97 aa)) enclose the Fibronectin type-III domain. Residues 537–557 (IIAIGGVIVASVLVFIVLLMI) form a helical membrane-spanning segment. Residues 558 to 766 (RYKVYGDGDS…STEWMLESTV (209 aa)) are Cytoplasmic-facing. 2 disordered regions span residues 568 to 601 (RRIK…PPAP) and 646 to 742 (CLLP…GEDG). Serine 713 is modified (phosphoserine). The span at 714–727 (YPRRARRTKRHRST) shows a compositional bias: basic residues.

The protein belongs to the LRFN family. In terms of assembly, forms heteromeric complexes with LRFN2, LRFN4 and LRFN5; binding to LRFN2 and LRFN5 may be weaker than that to LRFN4. Also interacts with LRFN3. Forms homomeric complexes, but not across cell junctions. Interacts with DLG1, DLG2 and DLG4, but not with MAGI2, not CASK. Interacts with DLG3. Interacts with 2 AMPA receptor subunits GRIA1 and GRIA2 and NMDA receptor subunit GRIN1. In terms of processing, glycosylated. In terms of tissue distribution, mainly expressed in brain (at protein level) and testis. In brain, found in cerebral cortex (including pyramidal neurons), hippocampus (including CA3 and CA1 neurons), dentate gyrus, cerebellum (including Purkinje neurons) (at protein level) (at protein level). Also expressed in the olfactory bulb.

The protein localises to the membrane. Its subcellular location is the synapse. It localises to the postsynaptic density membrane. In terms of biological role, promotes neurite outgrowth in hippocampal neurons. Involved in the regulation of the differentiation and maintenance of excitatory synapses. Induces the clustering of excitatory postsynaptic proteins, including DLG4, DLGAP1, GRIA1 and GRIN1. The polypeptide is Leucine-rich repeat and fibronectin type III domain-containing protein 1 (Lrfn1) (Rattus norvegicus (Rat)).